The primary structure comprises 352 residues: Ketoisovalerate oxidoreductase subunit VorB (352 aa).

In terms of assembly, heterotrimer of the VorA, VorB and VorC subunits.

The catalysed reaction is 3-methyl-2-oxobutanoate + 2 oxidized [2Fe-2S]-[ferredoxin] + CoA = 2-methylpropanoyl-CoA + 2 reduced [2Fe-2S]-[ferredoxin] + CO2 + H(+). The protein is Ketoisovalerate oxidoreductase subunit VorB (vorB) of Methanothermobacter thermautotrophicus (strain ATCC 29096 / DSM 1053 / JCM 10044 / NBRC 100330 / Delta H) (Methanobacterium thermoautotrophicum).